A 585-amino-acid polypeptide reads, in one-letter code: A-type ATP synthase subunit A (585 aa).

Residue 231 to 238 participates in ATP binding; it reads GPFGSGKT.

Belongs to the ATPase alpha/beta chains family. In terms of assembly, has multiple subunits with at least A(3), B(3), C, D, E, F, H, I and proteolipid K(x).

The protein resides in the cell membrane. The catalysed reaction is ATP + H2O + 4 H(+)(in) = ADP + phosphate + 5 H(+)(out). Component of the A-type ATP synthase that produces ATP from ADP in the presence of a proton gradient across the membrane. The A chain is the catalytic subunit. The sequence is that of A-type ATP synthase subunit A from Thermococcus sibiricus (strain DSM 12597 / MM 739).